The chain runs to 111 residues: 2Fe-2S ferredoxin (111 aa).

One can recognise a 2Fe-2S ferredoxin-type domain in the interval 5–107 (IKVTFVINNG…GIKVRLPSAT (103 aa)). Positions 42, 48, 51, and 88 each coordinate [2Fe-2S] cluster.

It belongs to the adrenodoxin/putidaredoxin family. The cofactor is [2Fe-2S] cluster.

In terms of biological role, ferredoxin are iron-sulfur proteins that transfer electrons in a wide variety of metabolic reactions. The chain is 2Fe-2S ferredoxin (fdxB) from Rickettsia bellii (strain RML369-C).